A 90-amino-acid chain; its full sequence is Phosphoribosyl-ATP pyrophosphatase (90 aa).

This sequence belongs to the PRA-PH family.

The protein localises to the cytoplasm. The catalysed reaction is 1-(5-phospho-beta-D-ribosyl)-ATP + H2O = 1-(5-phospho-beta-D-ribosyl)-5'-AMP + diphosphate + H(+). Its pathway is amino-acid biosynthesis; L-histidine biosynthesis; L-histidine from 5-phospho-alpha-D-ribose 1-diphosphate: step 2/9. This is Phosphoribosyl-ATP pyrophosphatase from Streptomyces griseus subsp. griseus (strain JCM 4626 / CBS 651.72 / NBRC 13350 / KCC S-0626 / ISP 5235).